We begin with the raw amino-acid sequence, 422 residues long: MDVLSPGQGNNTTSPPAPFETGGNTTGISDVTFSYQVITSLLLGTLIFCAVLGNACVVAAIALERSLQNVANYLIGSLAVTDLMVSVLVLPMAALYQVLNKWTLGQVTCDLFIALDVLCCTSSILHLCAIALDRYWAITDPIDYVNKRTPRRAAALISLTWLIGFLISIPPMLGWRTPEDRSDPDACTISKDHGYTIYSTFGAFYIPLLLMLVLYGRIFRAARFRIRKTVKKVEKTGADTRHGASPAPQPKKSVNGESGSRNWRLGVESKAGGALCANGAVRQGDDGAALEVIEVHRVGNSKEHLPLPSEAGPTPCAPASFERKNERNAEAKRKMALARERKTVKTLGIIMGTFILCWLPFFIVALVLPFCESSCHMPTLLGAIINWLGYSNSLLNPVIYAYFNKDFQNAFKKIIKCKFCRQ.

The interval 1–23 (MDVLSPGQGNNTTSPPAPFETGG) is disordered. Residues 1–38 (MDVLSPGQGNNTTSPPAPFETGGNTTGISDVTFSYQVI) lie on the Extracellular side of the membrane. N-linked (GlcNAc...) asparagine glycans are attached at residues Asn-10, Asn-11, and Asn-24. The chain crosses the membrane as a helical span at residues 39–59 (TSLLLGTLIFCAVLGNACVVA). The Cytoplasmic segment spans residues 60–73 (AIALERSLQNVANY). A helical transmembrane segment spans residues 74–98 (LIGSLAVTDLMVSVLVLPMAALYQV). At 99-107 (LNKWTLGQV) the chain is on the extracellular side. Residues 108–132 (TCDLFIALDVLCCTSSILHLCAIAL) form a helical membrane-spanning segment. The cysteines at positions 109 and 187 are disulfide-linked. Residues Asp-116 and Cys-120 each contribute to the serotonin site. Positions 133-135 (DRY) match the DRY motif; important for ligand-induced conformation changes motif. Over 133 to 152 (DRYWAITDPIDYVNKRTPRR) the chain is Cytoplasmic. The helical transmembrane segment at 153–174 (AAALISLTWLIGFLISIPPMLG) threads the bilayer. The Extracellular portion of the chain corresponds to 175–193 (WRTPEDRSDPDACTISKDH). A helical transmembrane segment spans residues 194 to 216 (GYTIYSTFGAFYIPLLLMLVLYG). The Cytoplasmic portion of the chain corresponds to 217–346 (RIFRAARFRI…LARERKTVKT (130 aa)). The tract at residues 235-262 (KTGADTRHGASPAPQPKKSVNGESGSRN) is disordered. Residues Thr-314, Lys-345, Thr-346, and Gly-352 each coordinate 1D-myo-inositol 4-phosphate. A helical membrane pass occupies residues 347–370 (LGIIMGTFILCWLPFFIVALVLPF). Residues 371–378 (CESSCHMP) lie on the Extracellular side of the membrane. A helical membrane pass occupies residues 379 to 403 (TLLGAIINWLGYSNSLLNPVIYAYF). Residues 396-400 (NPVIY) carry the NPxxY motif; important for ligand-induced conformation changes and signaling motif. Positions 403, 404, and 405 each coordinate 1D-myo-inositol 4-phosphate. The Cytoplasmic segment spans residues 404-422 (NKDFQNAFKKIIKCKFCRQ).

It belongs to the G-protein coupled receptor 1 family. 5-hydroxytryptamine receptor subfamily. HTR1A sub-subfamily. In terms of assembly, heterodimer; heterodimerizes with GPER1. Interacts with YIF1B. Interacts with GPR39 and GALR1.

Its subcellular location is the cell membrane. It is found in the cell projection. The protein resides in the dendrite. G-protein coupled receptor activity is regulated by lipids: phosphatidylinositol 4-phosphate increases HTR1A-mediated activity. G-protein coupled receptor for 5-hydroxytryptamine (serotonin). Also functions as a receptor for various drugs and psychoactive substances. Ligand binding causes a conformation change that triggers signaling via guanine nucleotide-binding proteins (G proteins) and modulates the activity of downstream effectors, such as adenylate cyclase. HTR1A is coupled to G(i)/G(o) G alpha proteins and mediates inhibitory neurotransmission: signaling inhibits adenylate cyclase activity and activates a phosphatidylinositol-calcium second messenger system that regulates the release of Ca(2+) ions from intracellular stores. Beta-arrestin family members regulate signaling by mediating both receptor desensitization and resensitization processes. This Gorilla gorilla gorilla (Western lowland gorilla) protein is 5-hydroxytryptamine receptor 1A (HTR1A).